Here is a 513-residue protein sequence, read N- to C-terminus: Histidine ammonia-lyase (513 aa).

The 5-imidazolinone (Ala-Gly) cross-link spans Ala-142–Gly-144. Ser-143 is modified (2,3-didehydroalanine (Ser)).

Belongs to the PAL/histidase family. Post-translationally, contains an active site 4-methylidene-imidazol-5-one (MIO), which is formed autocatalytically by cyclization and dehydration of residues Ala-Ser-Gly.

It localises to the cytoplasm. The enzyme catalyses L-histidine = trans-urocanate + NH4(+). The protein operates within amino-acid degradation; L-histidine degradation into L-glutamate; N-formimidoyl-L-glutamate from L-histidine: step 1/3. The chain is Histidine ammonia-lyase from Mesorhizobium japonicum (strain LMG 29417 / CECT 9101 / MAFF 303099) (Mesorhizobium loti (strain MAFF 303099)).